Here is a 790-residue protein sequence, read N- to C-terminus: Tumor necrosis factor alpha-induced protein 3 (790 aa).

N-acetylalanine is present on alanine 2. The segment at 58–300 is TRAF-binding; sequence PQFREIIHKA…LTDPENEMKE (243 aa). Residues 92–263 form the OTU domain; that stretch reads LVALKTNGDG…SHHFVPLVTL (172 aa). Residue aspartate 100 is part of the active site. Cysteine 103 functions as the Nucleophile in the catalytic mechanism. Interaction with ubiquitin stretches follow at residues 157–159, 190–192, and 224–227; these read LCY, SLE, and FAPL. Histidine 256 serves as the catalytic Proton acceptor. Over residues 357 to 368 the composition is skewed to basic and acidic residues; the sequence is QENSEQGRREGH. Positions 357–377 are disordered; sequence QENSEQGRREGHAQNPMEPSV. Residues 369–775 form an interaction with TNIP1 region; that stretch reads AQNPMEPSVP…ACDHFGNAKC (407 aa). An A20-type 1 zinc finger spans residues 381–416; that stretch reads SLMDVKCETPNCPFFMSVNTQPLCHECSERRQKNQN. An interaction with RIPK1 region spans residues 386–453; that stretch reads KCETPNCPFF…EPLAWNPEES (68 aa). 4 residues coordinate Zn(2+): cysteine 387, cysteine 392, cysteine 404, and cysteine 407. Disordered stretches follow at residues 415 to 434 and 447 to 468; these read QNKLPKLNSKPGPEGLPGMA and AWNPEESTGGPHSAPPTAPSPF. At serine 459 the chain carries Phosphoserine. 2 A20-type zinc fingers span residues 472–507 and 515–548; these read ETTAMKCRSPGCPFTLNVQHNGFCERCHNARQLHAS and HLDPGKCQACLQDVTRTFNGICSTCFKRTTAEAS. Positions 478, 483, 495, 498, 521, 524, 536, and 539 each coordinate Zn(2+). Residues 550–583 are disordered; that stretch reads SLSTSLPPSCHQRSKSDPSRLVRSPSPHSCHRAG. Serine 575 carries the phosphoserine modification. The A20-type 4 zinc-finger motif lies at 601-636; the sequence is RTGTSKCRKAGCVYFGTPENKGFCTLCFIEYRENKH. The required for proteasomal degradation of UBE2N and UBE2D3, TRAF6 deubiquitination, and TAX1BP1 interaction with UBE2N stretch occupies residues 605–655; it reads SKCRKAGCVYFGTPENKGFCTLCFIEYRENKHFAAASGKVSPTASRFQNTI. The tract at residues 606–790 is sufficient for inhibitory activity of TNF-induced NF-kappa-B activity; the sequence is KCRKAGCVYF…ECFQFKQMYG (185 aa). Zn(2+)-binding residues include cysteine 607, cysteine 612, cysteine 624, and cysteine 627. Position 645 is a phosphoserine (serine 645). The A20-type 5 zinc-finger motif lies at 651–686; sequence FQNTIPCLGRECGTLGSTMFEGYCQKCFIEAQNQRF. Residues cysteine 657, cysteine 662, cysteine 674, and cysteine 677 each coordinate Zn(2+). Residues 689 to 705 show a composition bias toward basic and acidic residues; the sequence is AKRTEEQLRSSQRRDVP. The tract at residues 689-712 is disordered; sequence AKRTEEQLRSSQRRDVPRTTQSTS. The tract at residues 697 to 790 is required for lysosomal localization and for TRAF2 lysosomal degradation; the sequence is RSSQRRDVPR…ECFQFKQMYG (94 aa). A20-type zinc fingers lie at residues 710 to 745 and 756 to 790; these read STSRPKCARASCKNILACRSEELCMECQHPNQRMGP and DPPKQRCRAPACDHFGNAKCNGYCNECFQFKQMYG. Cysteine 716, cysteine 721, cysteine 733, cysteine 736, cysteine 762, cysteine 767, cysteine 779, and cysteine 782 together coordinate Zn(2+).

Belongs to the peptidase C64 family. In terms of assembly, homodimer. Interacts with TNIP1, TAX1BP1 and TRAF2. Interacts with RNF11, ITCH and TAX1BP1 only after TNF stimulation; these interaction are transient and they are lost after 1 hour of stimulation with TNF. Interacts with YWHAZ and YWHAH. Interacts with IKBKG; the interaction is induced by TNF stimulation and by polyubiquitin. Interacts with RIPK1. Interacts with UBE2N; the interaction requires TAX1BP1. Interacts with TRAF6; the interaction is inhibited by HTLV-1 protein Tax. Post-translationally, proteolytically cleaved by MALT1 upon TCR stimulation; disrupts NF-kappa-B inhibitory function and results in increased IL-2 production. It is proposed that only a fraction of TNFAIP3 colocalized with TCR and CBM complex is cleaved, leaving the main TNFAIP3 pool intact.

The protein localises to the cytoplasm. It is found in the nucleus. It localises to the lysosome. The enzyme catalyses Thiol-dependent hydrolysis of ester, thioester, amide, peptide and isopeptide bonds formed by the C-terminal Gly of ubiquitin (a 76-residue protein attached to proteins as an intracellular targeting signal).. Ubiquitin-editing enzyme that contains both ubiquitin ligase and deubiquitinase activities. Involved in immune and inflammatory responses signaled by cytokines, such as TNF-alpha and IL-1 beta, or pathogens via Toll-like receptors (TLRs) through terminating NF-kappa-B activity. Essential component of a ubiquitin-editing protein complex, comprising also RNF11, ITCH and TAX1BP1, that ensures the transient nature of inflammatory signaling pathways. In cooperation with TAX1BP1 promotes disassembly of E2-E3 ubiquitin protein ligase complexes in IL-1R and TNFR-1 pathways; affected are at least E3 ligases TRAF6, TRAF2 and BIRC2, and E2 ubiquitin-conjugating enzymes UBE2N and UBE2D3. In cooperation with TAX1BP1 promotes ubiquitination of UBE2N and proteasomal degradation of UBE2N and UBE2D3. Upon TNF stimulation, deubiquitinates 'Lys-63'-polyubiquitin chains on RIPK1 and catalyzes the formation of 'Lys-48'-polyubiquitin chains. This leads to RIPK1 proteasomal degradation and consequently termination of the TNF- or LPS-mediated activation of NF-kappa-B. Deubiquitinates TRAF6 probably acting on 'Lys-63'-linked polyubiquitin. Upon T-cell receptor (TCR)-mediated T-cell activation, deubiquitinates 'Lys-63'-polyubiquitin chains on MALT1 thereby mediating disassociation of the CBM (CARD11:BCL10:MALT1) and IKK complexes and preventing sustained IKK activation. Deubiquitinates NEMO/IKBKG; the function is facilitated by TNIP1 and leads to inhibition of NF-kappa-B activation. Upon stimulation by bacterial peptidoglycans, probably deubiquitinates RIPK2. Can also inhibit I-kappa-B-kinase (IKK) through a non-catalytic mechanism which involves polyubiquitin; polyubiquitin promotes association with IKBKG and prevents IKK MAP3K7-mediated phosphorylation. Targets TRAF2 for lysosomal degradation. In vitro able to deubiquitinate 'Lys-11'-, 'Lys-48'- and 'Lys-63' polyubiquitin chains. Inhibitor of programmed cell death. Has a role in the function of the lymphoid system. Required for LPS-induced production of pro-inflammatory cytokines and IFN beta in LPS-tolerized macrophages. The polypeptide is Tumor necrosis factor alpha-induced protein 3 (TNFAIP3) (Homo sapiens (Human)).